A 148-amino-acid polypeptide reads, in one-letter code: 3-dehydroquinate dehydratase (148 aa).

Tyrosine 23 serves as the catalytic Proton acceptor. 3 residues coordinate substrate: asparagine 75, histidine 81, and aspartate 88. Residue histidine 101 is the Proton donor of the active site. Substrate-binding positions include 102 to 103 (LS) and arginine 112.

Belongs to the type-II 3-dehydroquinase family. Homododecamer.

It catalyses the reaction 3-dehydroquinate = 3-dehydroshikimate + H2O. It functions in the pathway metabolic intermediate biosynthesis; chorismate biosynthesis; chorismate from D-erythrose 4-phosphate and phosphoenolpyruvate: step 3/7. Catalyzes a trans-dehydration via an enolate intermediate. In Xanthomonas oryzae pv. oryzae (strain MAFF 311018), this protein is 3-dehydroquinate dehydratase.